Here is a 481-residue protein sequence, read N- to C-terminus: Ribosomal RNA small subunit methyltransferase F (481 aa).

S-adenosyl-L-methionine is bound by residues 119 to 125, E143, D170, and D188; that span reads ASAPGSK. C241 serves as the catalytic Nucleophile.

It belongs to the class I-like SAM-binding methyltransferase superfamily. RsmB/NOP family.

It localises to the cytoplasm. It carries out the reaction cytidine(1407) in 16S rRNA + S-adenosyl-L-methionine = 5-methylcytidine(1407) in 16S rRNA + S-adenosyl-L-homocysteine + H(+). Its function is as follows. Specifically methylates the cytosine at position 1407 (m5C1407) of 16S rRNA. This chain is Ribosomal RNA small subunit methyltransferase F, found in Shewanella sp. (strain MR-4).